A 395-amino-acid polypeptide reads, in one-letter code: Pesticidal crystal protein Cry6Ba (395 aa).

This sequence belongs to the cry6A endotoxin family.

Endotoxin with nematicidal activity. The protein is Pesticidal crystal protein Cry6Ba (cry6Ba) of Bacillus thuringiensis.